We begin with the raw amino-acid sequence, 1104 residues long: Nitrite reductase [NAD(P)H] (1104 aa).

44-79 contributes to the FAD binding site; that stretch reads QKIVVVGLGMVAVAFIEKLVKLDSERRKYDIVVIGE. An NAD(+)-binding site is contributed by 146-176; the sequence is YDILVLATGSDAVLPTSTPGHDAKGIFVYRT. The segment at 396–419 is disordered; it reads KFLPGQRPSAESIGAADPNREEEP. 4 residues coordinate [2Fe-2S] cluster: C500, C502, C535, and C538. [4Fe-4S] cluster-binding residues include C720, C726, C760, and C764. C764 is a binding site for siroheme. Residues 932–1040 form the Rieske domain; sequence WQPVIKADYF…VEEREDGWIY (109 aa). Residues C976, H978, C1001, and H1004 each coordinate [2Fe-2S] cluster. The segment at 1081-1104 is disordered; the sequence is GKRAGAKGIEGSKPTRSPSNTIDW. Residues 1094-1104 are compositionally biased toward polar residues; the sequence is PTRSPSNTIDW.

It belongs to the nitrite and sulfite reductase 4Fe-4S domain family. Homodimer. The cofactor is siroheme. Requires [4Fe-4S] cluster as cofactor. It depends on FAD as a cofactor. [2Fe-2S] cluster serves as cofactor.

The enzyme catalyses NH4(+) + 3 NADP(+) + 2 H2O = nitrite + 3 NADPH + 5 H(+). The catalysed reaction is NH4(+) + 3 NAD(+) + 2 H2O = nitrite + 3 NADH + 5 H(+). It participates in nitrogen metabolism; nitrate reduction (assimilation). The chain is Nitrite reductase [NAD(P)H] (niiA) from Emericella nidulans (strain FGSC A4 / ATCC 38163 / CBS 112.46 / NRRL 194 / M139) (Aspergillus nidulans).